The chain runs to 892 residues: MKTHPQAILLCVLFFITFGLLHVVEAGNQEGFISLDCGLSPNEPPYVDAATDLTYTTDNDFVQSGKTGTIDKELESTYNKPILQLRYFPEGVRNCYTLNVTLGTNYLIRASFVYGNYDGLNKELEFDLYLGPNLWANVNTAVYLMNGVTTEEIIHSTKSKVLQVCLIKTGESIPIINSLELRPLINDTYNTQSGSLKYLFRNYFSTSRRIIRYPNDVNDRHWYPFFDEDAWTELTTNLNVNSSNGYDPPKFVMASASTPISKNAPFNFTWSLIPSTAKFYSYMHFADIQTLQANETREFDMMLNGNLALERYRPKTFATGTIYFIKPQICEGGQCIIELLKTSKSTLPPLCSALEVFTVIDFPELETNQDDVIAIKNIQNTYGVSKTSWQGDPCVPKRFMWDGLNCNNSYISTPPTITFLNLSSSHLTGIIASAIQNLTHLQNLDLSNNNLTGGVPEFLAGLKSLLVINLSGNNLSGSVPQTLLQKKGLKLNLEGNIYLNCPDGSCVSKDGNGGAKKKNVVVLVVVSIALVVVLGSALALFLVFRKRKTPRNEVSRTSRSLDPTITTKNRRFTYSEVVKMTNNFEKILGKGGFGMVYHGTVNDAEQVAVKMLSPSSSQGYKEFKAEVELLLRVHHKNLVGLVGYCDEGENLSLIYEYMAKGDLKEHMLGNQGVSILDWKTRLKIVAESAQGLEYLHNGCKPPMVHRDVKTTNILLDEHFQAKLADFGLSRSFPLEGETRVDTVVAGTPGYLDPEYYRTNWLNEKSDVYSFGIVLLEIITNQHVINQSREKPHIAEWVGVMLTKGDIKSIIDPKFSGDYDAGSVWRAVELAMSCVNPSSTGRPTMSQVVIELNECLASENSRRGMSQNMESKGSIQYTEVSTNFGTEYTPEAR.

The signal sequence occupies residues 1–26 (MKTHPQAILLCVLFFITFGLLHVVEA). At 27–523 (GNQEGFISLD…GAKKKNVVVL (497 aa)) the chain is on the extracellular side. 5 N-linked (GlcNAc...) asparagine glycosylation sites follow: Asn99, Asn186, Asn241, Asn267, and Asn294. LRR repeat units lie at residues 375-396 (IKNI…PCVP), 399-422 (FMWD…FLNL), 423-444 (SSSH…LQNL), and 447-467 (SNNN…SLLV). Asn407, Asn421, Asn437, Asn450, and Asn469 each carry an N-linked (GlcNAc...) asparagine glycan. A helical membrane pass occupies residues 524-544 (VVVSIALVVVLGSALALFLVF). The Cytoplasmic portion of the chain corresponds to 545-892 (RKRKTPRNEV…FGTEYTPEAR (348 aa)). Residue Thr573 is modified to Phosphothreonine. Residues 582–855 (NNFEKILGKG…QVVIELNECL (274 aa)) enclose the Protein kinase domain. ATP is bound by residues 588 to 596 (LGKGGFGMV) and Lys610. A Phosphotyrosine modification is found at Tyr655. Asp707 acts as the Proton acceptor in catalysis. Thr742 and Thr747 each carry phosphothreonine. At Tyr755 the chain carries Phosphotyrosine.

Belongs to the protein kinase superfamily. Ser/Thr protein kinase family.

It localises to the cell membrane. The catalysed reaction is L-seryl-[protein] + ATP = O-phospho-L-seryl-[protein] + ADP + H(+). The enzyme catalyses L-threonyl-[protein] + ATP = O-phospho-L-threonyl-[protein] + ADP + H(+). This chain is Putative leucine-rich repeat receptor-like serine/threonine-protein kinase At2g04300, found in Arabidopsis thaliana (Mouse-ear cress).